The primary structure comprises 1043 residues: RNA cytidine acetyltransferase (1043 aa).

Residues 285–294 (GRGKSAAVGL) and arginine 462 contribute to the ATP site. Residues 551–736 (VLMAPIDKSR…VPVYIRQNSN (186 aa)) form the N-acetyltransferase domain. Acetyl-CoA-binding positions include 622-624 (VAV), 629-635 (QSMGYGG), and arginine 723. Positions 1020-1043 (IPDAKDPANKNAKKKKRFSSGGRR) are disordered. A compositionally biased stretch (basic residues) spans 1030–1043 (NAKKKKRFSSGGRR).

The protein belongs to the RNA cytidine acetyltransferase family. NAT10 subfamily. In terms of assembly, part of the small subunit (SSU) processome, composed of more than 70 proteins and the RNA chaperone small nucleolar RNA (snoRNA) U3.

Its subcellular location is the nucleus. It is found in the nucleolus. It catalyses the reaction a cytidine in 18S rRNA + acetyl-CoA + ATP + H2O = an N(4)-acetylcytidine in 18S rRNA + ADP + phosphate + CoA + H(+). The enzyme catalyses a cytidine in tRNA + acetyl-CoA + ATP + H2O = an N(4)-acetylcytidine in tRNA + ADP + phosphate + CoA + H(+). Functionally, RNA cytidine acetyltransferase with specificity toward both 18S rRNA and tRNAs. Catalyzes the formation of N(4)-acetylcytidine (ac4C) in 18S rRNA. Required for early nucleolar cleavages of precursor rRNA at sites A0, A1 and A2 during 18S rRNA synthesis. Catalyzes the formation of ac4C in serine and leucine tRNAs. Requires a tRNA-binding adapter protein for full tRNA acetyltransferase activity but not for 18S rRNA acetylation. Part of the small subunit (SSU) processome, first precursor of the small eukaryotic ribosomal subunit. During the assembly of the SSU processome in the nucleolus, many ribosome biogenesis factors, an RNA chaperone and ribosomal proteins associate with the nascent pre-rRNA and work in concert to generate RNA folding, modifications, rearrangements and cleavage as well as targeted degradation of pre-ribosomal RNA by the RNA exosome. This Caenorhabditis elegans protein is RNA cytidine acetyltransferase.